The chain runs to 466 residues: Asparagine--tRNA ligase (466 aa).

It belongs to the class-II aminoacyl-tRNA synthetase family. In terms of assembly, homodimer.

It localises to the cytoplasm. The catalysed reaction is tRNA(Asn) + L-asparagine + ATP = L-asparaginyl-tRNA(Asn) + AMP + diphosphate + H(+). This chain is Asparagine--tRNA ligase, found in Shigella dysenteriae serotype 1 (strain Sd197).